A 460-amino-acid chain; its full sequence is Bifunctional protein GlmU (460 aa).

The interval 1–229 is pyrophosphorylase; the sequence is MTNYAIILAA…FNESLGVNDR (229 aa). Residues 8-11, Lys22, Gln72, and 77-78 each bind UDP-N-acetyl-alpha-D-glucosamine; these read LAAG and GT. Mg(2+) is bound at residue Asp102. UDP-N-acetyl-alpha-D-glucosamine is bound by residues Gly139, Glu154, Asn169, and Asn227. Residue Asn227 coordinates Mg(2+). The linker stretch occupies residues 230–250; that stretch reads VALATAETVMRQRITQKHMVN. The tract at residues 251 to 460 is N-acetyltransferase; that stretch reads GVTFHNPETV…RLAHHPSRSK (210 aa). 2 residues coordinate UDP-N-acetyl-alpha-D-glucosamine: Arg332 and Lys350. The Proton acceptor role is filled by His362. UDP-N-acetyl-alpha-D-glucosamine contacts are provided by Tyr365 and Asn376. Residues Ala379, 385–386, Ser404, Ala422, and Arg439 contribute to the acetyl-CoA site; that span reads NY.

The protein in the N-terminal section; belongs to the N-acetylglucosamine-1-phosphate uridyltransferase family. It in the C-terminal section; belongs to the transferase hexapeptide repeat family. In terms of assembly, homotrimer. It depends on Mg(2+) as a cofactor.

It localises to the cytoplasm. It carries out the reaction alpha-D-glucosamine 1-phosphate + acetyl-CoA = N-acetyl-alpha-D-glucosamine 1-phosphate + CoA + H(+). It catalyses the reaction N-acetyl-alpha-D-glucosamine 1-phosphate + UTP + H(+) = UDP-N-acetyl-alpha-D-glucosamine + diphosphate. The protein operates within nucleotide-sugar biosynthesis; UDP-N-acetyl-alpha-D-glucosamine biosynthesis; N-acetyl-alpha-D-glucosamine 1-phosphate from alpha-D-glucosamine 6-phosphate (route II): step 2/2. Its pathway is nucleotide-sugar biosynthesis; UDP-N-acetyl-alpha-D-glucosamine biosynthesis; UDP-N-acetyl-alpha-D-glucosamine from N-acetyl-alpha-D-glucosamine 1-phosphate: step 1/1. It functions in the pathway bacterial outer membrane biogenesis; LPS lipid A biosynthesis. In terms of biological role, catalyzes the last two sequential reactions in the de novo biosynthetic pathway for UDP-N-acetylglucosamine (UDP-GlcNAc). The C-terminal domain catalyzes the transfer of acetyl group from acetyl coenzyme A to glucosamine-1-phosphate (GlcN-1-P) to produce N-acetylglucosamine-1-phosphate (GlcNAc-1-P), which is converted into UDP-GlcNAc by the transfer of uridine 5-monophosphate (from uridine 5-triphosphate), a reaction catalyzed by the N-terminal domain. In Streptococcus pyogenes serotype M3 (strain ATCC BAA-595 / MGAS315), this protein is Bifunctional protein GlmU.